The primary structure comprises 127 residues: MPTINQLVRKERKKVIDKSKSPALKKCPQRRGVCTRVYTTTPKKPNSALRKVAKVRLTTGFEVISYIGGEGHNLQEHSIVLVRGGRVKDLPGVKYHIVRGALDTAGVNNRTVSRSKYGTKRPKAAKK.

A 3-methylthioaspartic acid modification is found at aspartate 89.

It belongs to the universal ribosomal protein uS12 family. Part of the 30S ribosomal subunit. Contacts proteins S8 and S17. May interact with IF1 in the 30S initiation complex.

With S4 and S5 plays an important role in translational accuracy. Functionally, interacts with and stabilizes bases of the 16S rRNA that are involved in tRNA selection in the A site and with the mRNA backbone. Located at the interface of the 30S and 50S subunits, it traverses the body of the 30S subunit contacting proteins on the other side and probably holding the rRNA structure together. The combined cluster of proteins S8, S12 and S17 appears to hold together the shoulder and platform of the 30S subunit. This is Small ribosomal subunit protein uS12 from Aliarcobacter butzleri (strain RM4018) (Arcobacter butzleri).